A 397-amino-acid chain; its full sequence is Cytochrome b (397 aa).

A run of 4 helical transmembrane segments spans residues 48–68 (FGSM…LLSA), 92–113 (WMLR…YAHI), 128–148 (WYFG…GYTL), and 193–213 (FYTL…LHLF). The heme b site is built by His-98 and His-112. Residues His-197 and His-211 each coordinate heme b. Residue His-216 coordinates a ubiquinone. 4 helical membrane passes run 241–261 (IKDL…VCVD), 303–323 (AGGV…PTLH), 335–355 (LNQV…WIGA), and 362–382 (YIIL…WTPF).

Belongs to the cytochrome b family. In terms of assembly, the main subunits of complex b-c1 are: cytochrome b, cytochrome c1 and the Rieske protein. Heme b serves as cofactor.

The protein localises to the mitochondrion inner membrane. Its function is as follows. Component of the ubiquinol-cytochrome c reductase complex (complex III or cytochrome b-c1 complex) that is part of the mitochondrial respiratory chain. The b-c1 complex mediates electron transfer from ubiquinol to cytochrome c. Contributes to the generation of a proton gradient across the mitochondrial membrane that is then used for ATP synthesis. The polypeptide is Cytochrome b (MT-CYB) (Mytilus edulis (Blue mussel)).